The primary structure comprises 57 residues: UPF0509 protein YciZ (57 aa).

The protein belongs to the UPF0509 family.

In Escherichia coli O127:H6 (strain E2348/69 / EPEC), this protein is UPF0509 protein YciZ.